The chain runs to 124 residues: Small ribosomal subunit protein uS13 (124 aa).

The tract at residues 94-124 (GLPLRGQRTKNNSRTRKGKRKTVANKKKATK) is disordered. The segment covering 100-124 (QRTKNNSRTRKGKRKTVANKKKATK) has biased composition (basic residues).

The protein belongs to the universal ribosomal protein uS13 family. As to quaternary structure, part of the 30S ribosomal subunit. Forms a loose heterodimer with protein S19. Forms two bridges to the 50S subunit in the 70S ribosome.

In terms of biological role, located at the top of the head of the 30S subunit, it contacts several helices of the 16S rRNA. In the 70S ribosome it contacts the 23S rRNA (bridge B1a) and protein L5 of the 50S subunit (bridge B1b), connecting the 2 subunits; these bridges are implicated in subunit movement. Contacts the tRNAs in the A and P-sites. The sequence is that of Small ribosomal subunit protein uS13 from Flavobacterium johnsoniae (strain ATCC 17061 / DSM 2064 / JCM 8514 / BCRC 14874 / CCUG 350202 / NBRC 14942 / NCIMB 11054 / UW101) (Cytophaga johnsonae).